The following is a 1479-amino-acid chain: C-type mannose receptor 2 (1479 aa).

Residues 1–30 form the signal peptide; the sequence is MGPGRPAPAPWPRHLLRCVLLLGCLHLGRP. The Extracellular segment spans residues 31–1414; it reads GAPGDAALPE…PSALPENPAA (1384 aa). One can recognise a Ricin B-type lectin domain in the interval 41–167; the sequence is PNVFLIFSHG…WRIYGSEEDL (127 aa). The cysteines at positions 54 and 68 are disulfide-linked. A glycan (N-linked (GlcNAc...) (complex) asparagine) is linked at Asn69. The cysteines at positions 93 and 112 are disulfide-linked. Asn140 carries an N-linked (GlcNAc...) asparagine glycan. The Fibronectin type-II domain maps to 182–230; it reads SHGKPCTIPFKYDNQWFHGCTSTGREDGHLWCATTQDYGKDERWGFCPI. 4 disulfide bridges follow: Cys187–Cys213, Cys201–Cys228, Cys266–Cys359, and Cys335–Cys351. The C-type lectin 1 domain occupies 244–360; the sequence is LTDSCYQFNF…CSIALPYVCK (117 aa). Residue Asn364 is glycosylated (N-linked (GlcNAc...) asparagine). C-type lectin domains are found at residues 389–505, 528–644, 678–809, and 832–951; these read FQGH…SICK, HSPS…RYIC, KLRY…WICK, and FQEA…YICK. 2 cysteine pairs are disulfide-bonded: Cys410–Cys504 and Cys481–Cys496. Asn588 carries N-linked (GlcNAc...) asparagine glycosylation. 5 disulfides stabilise this stretch: Cys618/Cys635, Cys704/Cys808, Cys785/Cys800, Cys853/Cys950, and Cys927/Cys942. Residues Asn954 and Asn1029 are each glycosylated (N-linked (GlcNAc...) asparagine). C-type lectin domains are found at residues 979–1107, 1132–1243, and 1273–1393; these read FLNK…GFIC, YLNG…GAVC, and FREH…GVVC. Cys1078 and Cys1098 are oxidised to a cystine. Lys1142 is covalently cross-linked (Glycyl lysine isopeptide (Lys-Gly) (interchain with G-Cter in SUMO1)). Residues Cys1220 and Cys1234 are joined by a disulfide bond. An N-linked (GlcNAc...) asparagine glycan is attached at Asn1350. Cysteines 1369 and 1384 form a disulfide. A helical membrane pass occupies residues 1415 to 1435; that stretch reads LVVVLMAVLLLLALLTAALIL. At 1436–1479 the chain is on the cytoplasmic side; it reads YRRRQSIERGAFEGARYSRSSSSPTEATEKNILVSDMEMNEQQE. The segment at 1450–1479 is disordered; the sequence is ARYSRSSSSPTEATEKNILVSDMEMNEQQE.

As to quaternary structure, interacts with C-terminal region of type I collagen/COL1A1. Interacts directly with PLAUR/UPAR and PLAU/pro-UPA to form a tri-molecular complex. Interacts with collagen V. N-glycosylated. As to expression, ubiquitous with low expression in brain, placenta, lung, kidney, pancreas, spleen, thymus and colon. Expressed in endothelial cells, fibroblasts and macrophages. Highly expressed in fetal lung and kidney.

It localises to the membrane. In terms of biological role, may play a role as endocytotic lectin receptor displaying calcium-dependent lectin activity. Internalizes glycosylated ligands from the extracellular space for release in an endosomal compartment via clathrin-mediated endocytosis. May be involved in plasminogen activation system controlling the extracellular level of PLAUR/PLAU, and thus may regulate protease activity at the cell surface. May contribute to cellular uptake, remodeling and degradation of extracellular collagen matrices. May play a role during cancer progression as well as in other chronic tissue destructive diseases acting on collagen turnover. May participate in remodeling of extracellular matrix cooperating with the matrix metalloproteinases (MMPs). The chain is C-type mannose receptor 2 (MRC2) from Homo sapiens (Human).